A 353-amino-acid chain; its full sequence is Mitochondrial glutathione transporter SLC25A40 (353 aa).

3 Solcar repeats span residues 14-132, 140-224, and 234-328; these read ITPF…LFAL, RSDL…GKWW, and PTVA…GKAF. The next 6 helical transmembrane spans lie at 20 to 40, 104 to 124, 143 to 163, 200 to 221, 237 to 257, and 299 to 319; these read MMAS…LDVV, LWSG…IYFT, LAPL…ISPL, WGPT…YEKG, AITF…TLPF, and GLFA…AIMI.

Belongs to the mitochondrial carrier (TC 2.A.29) family.

It localises to the mitochondrion inner membrane. It carries out the reaction glutathione(in) = glutathione(out). Probable mitochondrial transporter required for glutathione import into mitochondria. Glutathione, which plays key roles in oxidative metabolism, is produced exclusively in the cytosol and is imported in many organelles. Mitochondrial glutathione is required for the activity and stability of proteins containing iron-sulfur clusters. The sequence is that of Mitochondrial glutathione transporter SLC25A40 from Danio rerio (Zebrafish).